A 54-amino-acid chain; its full sequence is Large ribosomal subunit protein bL33C (54 aa).

This sequence belongs to the bacterial ribosomal protein bL33 family.

The sequence is that of Large ribosomal subunit protein bL33C (rpmG3) from Streptomyces coelicolor (strain ATCC BAA-471 / A3(2) / M145).